We begin with the raw amino-acid sequence, 401 residues long: Putative hetero-Diels-Alderase asR5 (401 aa).

The signal sequence occupies residues 1–21 (MRRSFLISAALGLSMSTPALA). Residues N71, N77, N240, and N334 are each glycosylated (N-linked (GlcNAc...) asparagine).

The protein belongs to the eupF Diels-Alderase family.

The protein operates within secondary metabolite biosynthesis; terpenoid biosynthesis. In terms of biological role, putative hetero-Diels-Alderase; part of the gene cluster that mediates the biosynthesis of xenovulene A, an unusual meroterpenoid that has potent inhibitory effects on the human gamma-aminobutyrate A (GABAA) benzodiazepine receptor. The first step of xenovulene A biosynthesis is the biosynthesis of 3-methylorcinaldehyde performed by the non-reducing polyketide synthase aspks1. The salicylate hydroxylase asL1 then catalyzes the oxidative dearomatization of 3-methylorcinaldehyde to yield a dearomatized hydroxycyclohexadione. The 2-oxoglutarate-dependent dioxygenase asL3 further catalyzes the oxidative ring expansion to provide the first tropolone metabolite. The cytochrome P450 monooxygenase asR2 allows the synthesis of tropolone hemiacetal. In parallel, a previously unrecognised class of terpene cyclase, asR6, produces alpha-humulene from farnesylpyrophosphate (FPP). The putative Diels-Alderase asR5 probably catalyzes the formation of the tropolone-humulene skeleton by linking humulene and the polyketide moiety. Oxidative-ring contractions catalyzed by asL4 and asL6 then processively remove carbon atoms from the polyketide to yield xenovulene A. The sequence is that of Putative hetero-Diels-Alderase asR5 from Sarocladium schorii (Acremonium strictum (strain IMI 501407)).